The following is a 364-amino-acid chain: Chorismate synthase (364 aa).

Arginine 48 contributes to the NADP(+) binding site. FMN-binding positions include 131–133 (RSS), 243–244 (NA), glycine 288, 303–307 (KPTSS), and arginine 329.

The protein belongs to the chorismate synthase family. As to quaternary structure, homotetramer. It depends on FMNH2 as a cofactor.

The catalysed reaction is 5-O-(1-carboxyvinyl)-3-phosphoshikimate = chorismate + phosphate. It participates in metabolic intermediate biosynthesis; chorismate biosynthesis; chorismate from D-erythrose 4-phosphate and phosphoenolpyruvate: step 7/7. Functionally, catalyzes the anti-1,4-elimination of the C-3 phosphate and the C-6 proR hydrogen from 5-enolpyruvylshikimate-3-phosphate (EPSP) to yield chorismate, which is the branch point compound that serves as the starting substrate for the three terminal pathways of aromatic amino acid biosynthesis. This reaction introduces a second double bond into the aromatic ring system. In Brucella abortus (strain S19), this protein is Chorismate synthase.